Reading from the N-terminus, the 156-residue chain is Large ribosomal subunit protein uL22 (156 aa).

The protein belongs to the universal ribosomal protein uL22 family. In terms of assembly, part of the 50S ribosomal subunit.

Functionally, this protein binds specifically to 23S rRNA. It makes multiple contacts with different domains of the 23S rRNA in the assembled 50S subunit and ribosome. The globular domain of the protein is located near the polypeptide exit tunnel on the outside of the subunit, while an extended beta-hairpin is found that lines the wall of the exit tunnel in the center of the 70S ribosome. This is Large ribosomal subunit protein uL22 from Sulfolobus acidocaldarius (strain ATCC 33909 / DSM 639 / JCM 8929 / NBRC 15157 / NCIMB 11770).